The following is a 382-amino-acid chain: Alkanesulfonate monooxygenase (382 aa).

It belongs to the SsuD family. Homotetramer.

The enzyme catalyses an alkanesulfonate + FMNH2 + O2 = an aldehyde + FMN + sulfite + H2O + 2 H(+). Its function is as follows. Catalyzes the desulfonation of aliphatic sulfonates. The sequence is that of Alkanesulfonate monooxygenase from Yersinia pseudotuberculosis serotype O:1b (strain IP 31758).